Reading from the N-terminus, the 156-residue chain is Phosphopantetheine adenylyltransferase (156 aa).

Residue Thr9 participates in substrate binding. ATP contacts are provided by residues Thr9–Phe10 and His17. Positions 41, 73, and 87 each coordinate substrate. Residues Gly88 to Arg90, Glu98, and Trp123 to Thr129 each bind ATP.

The protein belongs to the bacterial CoaD family. In terms of assembly, homohexamer. Mg(2+) serves as cofactor.

It is found in the cytoplasm. The catalysed reaction is (R)-4'-phosphopantetheine + ATP + H(+) = 3'-dephospho-CoA + diphosphate. It participates in cofactor biosynthesis; coenzyme A biosynthesis; CoA from (R)-pantothenate: step 4/5. Functionally, reversibly transfers an adenylyl group from ATP to 4'-phosphopantetheine, yielding dephospho-CoA (dPCoA) and pyrophosphate. The protein is Phosphopantetheine adenylyltransferase of Haemophilus influenzae (strain ATCC 51907 / DSM 11121 / KW20 / Rd).